Consider the following 425-residue polypeptide: Glucose-6-phosphate 1-dehydrogenase (425 aa).

NADP(+) contacts are provided by Arg-44 and Lys-135. Positions 165, 169, 201, and 220 each coordinate substrate. His-225 acts as the Proton acceptor in catalysis. Lys-311 contributes to the substrate binding site.

It belongs to the glucose-6-phosphate dehydrogenase family.

The enzyme catalyses D-glucose 6-phosphate + NADP(+) = 6-phospho-D-glucono-1,5-lactone + NADPH + H(+). The protein operates within carbohydrate degradation; pentose phosphate pathway; D-ribulose 5-phosphate from D-glucose 6-phosphate (oxidative stage): step 1/3. Its function is as follows. Catalyzes the oxidation of glucose 6-phosphate to 6-phosphogluconolactone. The polypeptide is Glucose-6-phosphate 1-dehydrogenase (Helicobacter pylori (strain ATCC 700392 / 26695) (Campylobacter pylori)).